The chain runs to 382 residues: Anhydro-N-acetylmuramic acid kinase (382 aa).

22-29 (GTSMDGVD) is a binding site for ATP.

Belongs to the anhydro-N-acetylmuramic acid kinase family.

It carries out the reaction 1,6-anhydro-N-acetyl-beta-muramate + ATP + H2O = N-acetyl-D-muramate 6-phosphate + ADP + H(+). Its pathway is amino-sugar metabolism; 1,6-anhydro-N-acetylmuramate degradation. It functions in the pathway cell wall biogenesis; peptidoglycan recycling. In terms of biological role, catalyzes the specific phosphorylation of 1,6-anhydro-N-acetylmuramic acid (anhMurNAc) with the simultaneous cleavage of the 1,6-anhydro ring, generating MurNAc-6-P. Is required for the utilization of anhMurNAc either imported from the medium or derived from its own cell wall murein, and thus plays a role in cell wall recycling. This chain is Anhydro-N-acetylmuramic acid kinase, found in Burkholderia orbicola (strain MC0-3).